A 492-amino-acid polypeptide reads, in one-letter code: Serine incorporator 4 (492 aa).

Helical transmembrane passes span phenylalanine 58–valine 78, alanine 113–valine 133, serine 148–proline 168, isoleucine 179–alanine 199, phenylalanine 217–leucine 237, leucine 254–isoleucine 274, serine 281–leucine 301, isoleucine 330–alanine 350, glycine 421–phenylalanine 441, and valine 464–alanine 484.

Belongs to the TDE1 family.

It localises to the membrane. Its function is as follows. Incorporates a polar amino acid serine into membranes and facilitates the synthesis of two serine-derived lipids, phosphatidylserine and sphingolipids. The protein is Serine incorporator 4 (Serinc4) of Rattus norvegicus (Rat).